Reading from the N-terminus, the 482-residue chain is Putative ankyrin repeat protein FPV232 (482 aa).

9 ANK repeats span residues 36 to 65 (IPLIPLHQAVEARNLEVVEALLERGHNVNE), 69 to 100 (RYLTPLHIICSHPNKIGMKEVIAEKTKRDLSS), 101 to 128 (YEERAISEACYNNDINIFKMLLLNDGNR), 129 to 161 (TIDDVQLCTIDYDDSIDTKIIKLLLAYGADTKI), 166 to 195 (KLKTALHYASTNKNYKLAEYLLIYGAEVNS), 199 to 228 (GNNSPMHEAVRHRNEDVVKILLQYGSNTDH), 232 to 265 (CGTTPLHISVGRVLNRNNYSILKILLEHGTSVNI), 270 to 297 (LGFTALHLSIHSEDKLNLLLEYGADPNI), and 301 to 332 (EKETPLSMAVKVTRYDINIYNRLIYNICLRAF).

This Fowlpox virus (strain NVSL) (FPV) protein is Putative ankyrin repeat protein FPV232.